A 114-amino-acid polypeptide reads, in one-letter code: UPF0145 protein TTHA1944 (114 aa).

Belongs to the UPF0145 family.

The protein is UPF0145 protein TTHA1944 of Thermus thermophilus (strain ATCC 27634 / DSM 579 / HB8).